The sequence spans 421 residues: UDP-N-acetylglucosamine 1-carboxyvinyltransferase (421 aa).

A phosphoenolpyruvate-binding site is contributed by 22-23 (KN). R93 lines the UDP-N-acetyl-alpha-D-glucosamine pocket. C117 acts as the Proton donor in catalysis. At C117 the chain carries 2-(S-cysteinyl)pyruvic acid O-phosphothioketal. UDP-N-acetyl-alpha-D-glucosamine-binding positions include 122–126 (RPVDL), D308, and V330.

Belongs to the EPSP synthase family. MurA subfamily.

It is found in the cytoplasm. The enzyme catalyses phosphoenolpyruvate + UDP-N-acetyl-alpha-D-glucosamine = UDP-N-acetyl-3-O-(1-carboxyvinyl)-alpha-D-glucosamine + phosphate. It participates in cell wall biogenesis; peptidoglycan biosynthesis. In terms of biological role, cell wall formation. Adds enolpyruvyl to UDP-N-acetylglucosamine. This chain is UDP-N-acetylglucosamine 1-carboxyvinyltransferase, found in Pseudomonas paraeruginosa (strain DSM 24068 / PA7) (Pseudomonas aeruginosa (strain PA7)).